A 1055-amino-acid chain; its full sequence is Vacuolar protein sorting-associated protein 54 (1055 aa).

A coiled-coil region spans residues 363–383 (TKKIIEVHQKYEQKKHLLAKL). Residues 774 to 794 (IDDGPTKKPFKRTGSSATIDS) are disordered.

This sequence belongs to the VPS54 family. Component of the Golgi-associated retrograde protein (GARP) complex, also called VFT (VPS fifty-three) complex, composed of VPS51, VPS52, VPS53 and VPS54.

The protein resides in the golgi apparatus. It is found in the trans-Golgi network. Its function is as follows. Acts as a component of the GARP complex that is involved in retrograde transport from early and late endosomes to the trans-Golgi network (TGN). The GARP complex facilitates tethering as well as SNARE complex assembly at the Golgi. The polypeptide is Vacuolar protein sorting-associated protein 54 (vps-54) (Caenorhabditis briggsae).